The primary structure comprises 134 residues: Small ribosomal subunit protein bS16 (134 aa).

The segment at 79-134 is disordered; sequence AGIAKRPSRNNPTKGEPGKKAQERLALAKQAEEEAAAKAAEAAAAAAAPAEEAASE. Residues 115-134 are compositionally biased toward low complexity; that stretch reads AKAAEAAAAAAAPAEEAASE.

Belongs to the bacterial ribosomal protein bS16 family.

The protein is Small ribosomal subunit protein bS16 of Brucella suis (strain ATCC 23445 / NCTC 10510).